A 245-amino-acid polypeptide reads, in one-letter code: MHPQGRAAPPQLLLGLFLVLLLLLQLSAPISASENPKVKQKALIRQREVVDLYNGMCLQGPAGVPGRDGSPGANGIPGTPGIPGRDGFKGEKGECLRESFEESWTPNYKQCSWSSLNYGIDLGKIAECTFTKMRSNSALRVLFSGSLRLKCRNACCQRWYFTFNGAECSGPLPIEAIIYLDQGSPELNSTINIHRTSSVEGLCEGIGAGLVDVAIWVGTCSDYPKGDASTGWNSVSRIIIEELPK.

A signal peptide spans 1-32; that stretch reads MHPQGRAAPPQLLLGLFLVLLLLLQLSAPISA. One can recognise a Collagen-like domain in the interval 59 to 92; sequence QGPAGVPGRDGSPGANGIPGTPGIPGRDGFKGEK. The tract at residues 64–87 is disordered; that stretch reads VPGRDGSPGANGIPGTPGIPGRDG. Asn-188 is a glycosylation site (N-linked (GlcNAc...) asparagine).

In terms of processing, N-glycosylated.

The protein localises to the secreted. It localises to the extracellular space. It is found in the extracellular matrix. Functionally, may act as a negative regulator of collagen matrix deposition. This Mus musculus (Mouse) protein is Collagen triple helix repeat-containing protein 1 (Cthrc1).